We begin with the raw amino-acid sequence, 126 residues long: Protein ApaG (126 aa).

An ApaG domain is found at 2 to 126; the sequence is TELETSIKID…FRLSIPGLLH (125 aa).

The chain is Protein ApaG from Shewanella woodyi (strain ATCC 51908 / MS32).